The primary structure comprises 658 residues: Glycogen debranching enzyme (658 aa).

The Nucleophile role is filled by aspartate 336. Glutamate 371 (proton donor) is an active-site residue. Residues 459-484 (EANGEENRDGTNSNYSDNHGKEGLGG) are disordered.

This sequence belongs to the glycosyl hydrolase 13 family.

The catalysed reaction is Hydrolysis of (1-&gt;6)-alpha-D-glucosidic linkages to branches with degrees of polymerization of three or four glucose residues in limit dextrin.. It functions in the pathway glycan degradation; glycogen degradation. Its function is as follows. Removes maltotriose and maltotetraose chains that are attached by 1,6-alpha-linkage to the limit dextrin main chain, generating a debranched limit dextrin. This Salmonella dublin (strain CT_02021853) protein is Glycogen debranching enzyme.